The sequence spans 202 residues: Adenylyl-sulfate kinase (202 aa).

31-38 is a binding site for ATP; that stretch reads GLSASGKS. Catalysis depends on serine 105, which acts as the Phosphoserine intermediate.

The protein belongs to the APS kinase family.

It catalyses the reaction adenosine 5'-phosphosulfate + ATP = 3'-phosphoadenylyl sulfate + ADP + H(+). Its pathway is sulfur metabolism; hydrogen sulfide biosynthesis; sulfite from sulfate: step 2/3. Its function is as follows. Catalyzes the synthesis of activated sulfate. This Saccharomyces pastorianus (Lager yeast) protein is Adenylyl-sulfate kinase (MET14).